Consider the following 459-residue polypeptide: Mitochondrial distribution and morphology protein 34 (459 aa).

The SMP-LTD domain occupies 1–190 (MSFRFNEAVF…LPSLIFNTSQ (190 aa)). Residues 338-347 (RSNSNDDNAK) show a composition bias toward basic and acidic residues. The tract at residues 338-375 (RSNSNDDNAKPRRRKIKCKKTRTPSNLQSQGEQAVDDS) is disordered. Positions 348–359 (PRRRKIKCKKTR) are enriched in basic residues.

It belongs to the MDM34 family. As to quaternary structure, component of the ER-mitochondria encounter structure (ERMES) or MDM complex, composed of MMM1, MDM10, MDM12 and MDM34. Post-translationally, ubiquitinated by a SCF (SKP1-CUL1-F-box protein) E3 ubiquitin-protein ligase complex containing the F-box protein MDM30. Ubiquitination is important for mitochondrial integrity.

The protein localises to the mitochondrion outer membrane. Functionally, component of the ERMES/MDM complex, which serves as a molecular tether to connect the endoplasmic reticulum (ER) and mitochondria. Components of this complex are involved in the control of mitochondrial shape and protein biogenesis, and function in nonvesicular lipid trafficking between the ER and mitochondria. MDM34 is required for the interaction of the ER-resident membrane protein MMM1 and the outer mitochondrial membrane-resident beta-barrel protein MDM10. The sequence is that of Mitochondrial distribution and morphology protein 34 from Saccharomyces cerevisiae (strain AWRI1631) (Baker's yeast).